The chain runs to 110 residues: Cuticle protein 13 (110 aa).

In Limulus polyphemus (Atlantic horseshoe crab), this protein is Cuticle protein 13.